Consider the following 794-residue polypeptide: Glutamine--tRNA ligase (794 aa).

Residues 192–217 form a disordered region; it reads DNEKPKKKKEKPAKVEDKAAPVATSE. The 'HIGH' region motif lies at 277–287; it reads PEPNGYLHIGH. ATP-binding positions include 278–280 and 284–290; these read EPN and HIGHAKA. Residues Asp-310 and Tyr-450 each coordinate L-glutamine. ATP-binding positions include Thr-469, 498 to 499, and 506 to 508; these read RL and MSK. A 'KMSKS' region motif is present at residues 505-509; it reads VMSKR.

The protein belongs to the class-I aminoacyl-tRNA synthetase family.

It catalyses the reaction tRNA(Gln) + L-glutamine + ATP = L-glutaminyl-tRNA(Gln) + AMP + diphosphate. This chain is Glutamine--tRNA ligase, found in Lupinus luteus (European yellow lupine).